The following is a 413-amino-acid chain: Arginine biosynthesis bifunctional protein ArgJ (413 aa).

The substrate site is built by threonine 158, lysine 184, threonine 195, glutamate 285, asparagine 408, and serine 413. Threonine 195 serves as the catalytic Nucleophile.

It belongs to the ArgJ family. As to quaternary structure, heterotetramer of two alpha and two beta chains.

It localises to the cytoplasm. The catalysed reaction is N(2)-acetyl-L-ornithine + L-glutamate = N-acetyl-L-glutamate + L-ornithine. It carries out the reaction L-glutamate + acetyl-CoA = N-acetyl-L-glutamate + CoA + H(+). Its pathway is amino-acid biosynthesis; L-arginine biosynthesis; L-ornithine and N-acetyl-L-glutamate from L-glutamate and N(2)-acetyl-L-ornithine (cyclic): step 1/1. It functions in the pathway amino-acid biosynthesis; L-arginine biosynthesis; N(2)-acetyl-L-ornithine from L-glutamate: step 1/4. Functionally, catalyzes two activities which are involved in the cyclic version of arginine biosynthesis: the synthesis of N-acetylglutamate from glutamate and acetyl-CoA as the acetyl donor, and of ornithine by transacetylation between N(2)-acetylornithine and glutamate. This Rhizobium meliloti (strain 1021) (Ensifer meliloti) protein is Arginine biosynthesis bifunctional protein ArgJ.